The primary structure comprises 72 residues: Translation initiation factor IF-1 (72 aa).

The region spanning Met1–Arg72 is the S1-like domain.

It belongs to the IF-1 family. Component of the 30S ribosomal translation pre-initiation complex which assembles on the 30S ribosome in the order IF-2 and IF-3, IF-1 and N-formylmethionyl-tRNA(fMet); mRNA recruitment can occur at any time during PIC assembly.

It localises to the cytoplasm. Its function is as follows. One of the essential components for the initiation of protein synthesis. Stabilizes the binding of IF-2 and IF-3 on the 30S subunit to which N-formylmethionyl-tRNA(fMet) subsequently binds. Helps modulate mRNA selection, yielding the 30S pre-initiation complex (PIC). Upon addition of the 50S ribosomal subunit IF-1, IF-2 and IF-3 are released leaving the mature 70S translation initiation complex. The polypeptide is Translation initiation factor IF-1 (Pseudomonas syringae pv. tomato (strain ATCC BAA-871 / DC3000)).